The primary structure comprises 492 residues: Ferruginol synthase (492 aa).

A helical membrane pass occupies residues 1-21 (METIALLAALFFIALTCFLTS). Residues 22-492 (GRRRNLPPGP…VPLKIIPLRP (471 aa)) are Cytoplasmic-facing. A heme-binding site is contributed by C436.

This sequence belongs to the cytochrome P450 family. Heme is required as a cofactor.

Its subcellular location is the endoplasmic reticulum membrane. It carries out the reaction abieta-8,11,13-triene + reduced [NADPH--hemoprotein reductase] + O2 = ferruginol + oxidized [NADPH--hemoprotein reductase] + H2O + H(+). The protein operates within secondary metabolite biosynthesis; terpenoid biosynthesis. Cytochrome P450 enzyme (CYP) which catalyzes a unique two-electron oxidation cascade on abieta-8,11,13-triene to produce ferruginol, an intermediate in tanshinone biosynthesis. The chain is Ferruginol synthase from Isodon rubescens (Rabdosia rubescens).